Reading from the N-terminus, the 547-residue chain is Cytochrome P450 monooxygenase fsoD (547 aa).

A helical membrane pass occupies residues 3–23 (DITLAAVSIGLFFYVGARAVL). C490 serves as a coordination point for heme.

This sequence belongs to the cytochrome P450 family. Requires heme as cofactor.

Its subcellular location is the membrane. The enzyme catalyses isomotiol + reduced [NADPH--hemoprotein reductase] + O2 = 2alpha-hydroxyisomotiol + oxidized [NADPH--hemoprotein reductase] + H2O + H(+). Its pathway is secondary metabolite biosynthesis; terpenoid biosynthesis. In terms of biological role, cytochrome P450 monooxygenase; part of the gene cluster that mediates the biosynthesis of the enfumafungin-type antibiotic, fuscoatroside. Within the pathway, fsoD catalyzes the hydroxylation at position C2 of isomotiol to produce 2-alpha-hydroxy-isomotiol. FsoD may also hydroxylate the intermediates 3-O-(beta-D-glucopyranosyl)-isomotiol and 2-deacetoxy-fuscoatroside at the same position C2. The fuscoatroside biosynthesis is initiated by the cyclization of 2,3(S)-oxidosqualene through FsoA's terpene cyclase (TC) domain, leading to the formation of the fernane skeleton isomotiol, harboring a fernane triterpene skeleton with a C8-C9 double bond. Subsequently, C2-alpha-hydroxylation mediated by fsoD results in the production of 2-alpha-hydroxy-isomotiol, which is further acetylated by fsoF. The glycosyltransferase (GT) domain of FsoA may convert isomotiol, 2-alpha-hydroxy-isomotiol, and the acetylated derivative of 2-alpha-hydroxy-isomotiol into their corresponding glycosides 3-O-(beta-D-glucopyranosyl)-isomotiol, 3-O-(beta-D-glucopyranosyl)-2-alpha-hydroxy-isomotiol, and 3-O-(beta-D-glucopyranosyl)-2-alpha-acetoxy-isomotiol, which then undergo oxidative cleavage under the action of fsoE to form s 2-deacetoxy-fuscoatroside, 2-deacetyl-fuscoatroside, and fuscoatroside, respectively. Although hydroxylation followed by acetylation of 3-O-(beta-D-glucopyranosyl)-isomotiol and 2-deacetoxy-fuscoatroside by fsoD and fsoF could not be ruled out, this process is likely to occur with difficulty due to bulky steric hindrance caused by the presence of a glycan at C3 in these compounds. Interestingly, fsoE can also utilize the aglycones isomotiol and 2-alpha-hydroxy-isomotiol as substrates to generate 19-beta-hydroxy-isomotiol and 2-alpha,19-beta-dihydroxy-isomotiol, respectively. These reactions occur with lower efficiency. Finally, fsoE can further convert 2-alpha,19-beta-dihydroxy-isomotiol into 2-alpha-hydroxy-ismotiol-19-one and 2-alpha-hydroxy-ismotiol-19-one into 2-deacetyl-3-deglucopyranosyl-fuscoatroside. In Humicola fuscoatra, this protein is Cytochrome P450 monooxygenase fsoD.